A 293-amino-acid chain; its full sequence is MEEQEIGVPAASLAGIKHIILILSGKGGVGKSSVTTQTALTLCSMGFKVGVLDIDLTGPSLPRMFGLENESIYQGPEGWQPVKVETNSTGSLSVISLGFLLGDRGNSVIWRGPKKTSMIKQFISDVAWGELDYLLIDTPPGTSDEHISIAEELRYSKPDGGIVVTTPQSVATADVKKEINFCKKVDLKILGIIENMSGFVCPHCAECTNIFSSGGGKRLSEQFSVPYLGNVPIDPKFVEMIENQVSSKKTLVEMYRESSLCPIFEEIMKKLRKQDTTTPVVDKHEQPQIESPK.

An ATP-binding site is contributed by 25 to 32 (GKGGVGKS). The [4Fe-4S] cluster site is built by Cys201 and Cys204. Phosphoserine is present on Ser291.

The protein belongs to the Mrp/NBP35 ATP-binding proteins family. NUBP2/CFD1 subfamily. In terms of assembly, heterotetramer of 2 NBP35 and 2 CFD1 chains. [4Fe-4S] cluster is required as a cofactor.

It localises to the cytoplasm. Component of the cytosolic iron-sulfur (Fe/S) protein assembly (CIA) machinery. Required for maturation of extramitochondrial Fe-S proteins. The NBP35-CFD1 heterotetramer forms a Fe-S scaffold complex, mediating the de novo assembly of an Fe-S cluster and its transfer to target apoproteins. Nucleotide binding/hydrolysis seems to be critcal for loading of Fe-S clusters onto CFD1 and NBP35. Required for biogenesis and export of both ribosomal subunits, which may reflect a role in assembly of the Fe/S clusters in RLI1, a protein which performs rRNA processing and ribosome export. The protein is Cytosolic Fe-S cluster assembly factor CFD1 of Saccharomyces cerevisiae (strain ATCC 204508 / S288c) (Baker's yeast).